The primary structure comprises 46 residues: Large ribosomal subunit protein bL33B (46 aa).

The protein belongs to the bacterial ribosomal protein bL33 family.

This Mycoplasmopsis pulmonis (strain UAB CTIP) (Mycoplasma pulmonis) protein is Large ribosomal subunit protein bL33B (rpmG2).